Consider the following 842-residue polypeptide: Netrin receptor UNC5A (842 aa).

The N-terminal stretch at 1–25 (MAVRPGLWPALLGIVLAAWLRGSGA) is a signal peptide. The Extracellular segment spans residues 26-306 (QQSATVANPV…ASGPEDVALY (281 aa)). An Ig-like domain is found at 44–141 (PHFLVEPEDV…SGTTKSQKAY (98 aa)). Cystine bridges form between cysteine 65–cysteine 126, cysteine 77–cysteine 124, and cysteine 170–cysteine 221. N-linked (GlcNAc...) asparagine glycosylation is found at asparagine 107 and asparagine 218. The region spanning 155–234 (PLAKEVSLEQ…NIVARRRSAS (80 aa)) is the Ig-like C2-type domain. In terms of domain architecture, TSP type-1 spans 242-294 (DGSWSPWSKWSACGLDCTHWRSRECSDPAPRNGGEECQGTDLDTRNCTSDLCV). Residues tryptophan 245, tryptophan 248, and tryptophan 251 are each glycosylated (C-linked (Man) tryptophan). Cystine bridges form between cysteine 254–cysteine 288, cysteine 258–cysteine 293, and cysteine 266–cysteine 278. A glycan (N-linked (GlcNAc...) asparagine) is linked at asparagine 287. A helical transmembrane segment spans residues 307 to 327 (VGLIAVAVCLVLLLLVLILVY). The Cytoplasmic portion of the chain corresponds to 328–842 (CRKKEGLDSD…GLFTVSEAEC (515 aa)). One can recognise a ZU5 domain in the interval 441–584 (NMTYGTFNFL…LGRFALVGEA (144 aa)). An interaction with DCC region spans residues 605–623 (SLEYNIRVYCLHDTHDALK). The 81-residue stretch at 761-841 (QKIISSLDPP…AGLFTVSEAE (81 aa)) folds into the Death domain.

Belongs to the unc-5 family. In terms of assembly, homodimer and homooligomer. Interacts with the cytoplasmic part of DCC. Interacts with MAGED1. Interacts with PRKCABP, possibly mediating some interaction with PKC. Interacts (via extracellular domain) with FLRT2 (via extracellular domain). Interacts (via extracellular domain) with FLRT3 (via extracellular domain). Phosphorylated on cytoplasmic tyrosine residues. Phosphorylated by PKC in vitro. In terms of processing, proteolytically cleaved by caspases during apoptosis. The cleavage does not take place when the receptor is associated with netrin ligand. Its cleavage by caspases is required to induce apoptosis. Post-translationally, the two extracellular TSRs of UNC5A contain WxxWxxWxxC motifs that can be C-mannosylated on all tryptophans. DPY19L1 preferentially mannosylates the first two tryptophans and DPY19L3 prefers the third. C-mannosylation by DPY19L1 is required for transport of UNC5A from the endoplasmic reticulum to the cell surface.

It is found in the cell membrane. It localises to the membrane raft. Its subcellular location is the cell projection. The protein resides in the neuron projection. In terms of biological role, receptor for netrin required for axon guidance. Functions in the netrin signaling pathway and promotes neurite outgrowth in response to NTN1. Mediates axon repulsion of neuronal growth cones in the developing nervous system in response to netrin. Axon repulsion in growth cones may be mediated by its association with DCC that may trigger signaling for repulsion. It also acts as a dependence receptor required for apoptosis induction when not associated with netrin ligand. The protein is Netrin receptor UNC5A (UNC5A) of Homo sapiens (Human).